The sequence spans 85 residues: MKSQIFFAVAALFLLTVRTYASKSKEQDLRDALFSAMFSADNQLNPQERECRYWLGTCSKTGDCCSHLSCSPKHGWCVWDWTFRK.

The first 21 residues, Met-1–Ala-21, serve as a signal peptide directing secretion. A propeptide spanning residues Ser-22–Arg-49 is cleaved from the precursor. Intrachain disulfides connect Cys-51-Cys-65, Cys-58-Cys-70, and Cys-64-Cys-77.

Belongs to the neurotoxin 10 (Hwtx-1) family. 18 (Hntx-VII) subfamily. Expressed by the venom gland.

It localises to the secreted. In terms of biological role, ion channel impairing toxin that inhibits voltage-gated sodium channels. The recombinantly expressed toxin shows a weak activity against Nav1.7/SCN9A, and shifts the voltage dependence of channel activation to more depolarized potentials. This is U5-theraphotoxin-Hhn1a from Cyriopagopus hainanus (Chinese bird spider).